A 79-amino-acid polypeptide reads, in one-letter code: Acyl carrier protein (79 aa).

Residues 3-78 (QEILEKVCSI…DAVKFIEEKK (76 aa)) form the Carrier domain. An O-(pantetheine 4'-phosphoryl)serine modification is found at Ser-38.

Belongs to the acyl carrier protein (ACP) family. 4'-phosphopantetheine is transferred from CoA to a specific serine of apo-ACP by AcpS. This modification is essential for activity because fatty acids are bound in thioester linkage to the sulfhydryl of the prosthetic group.

Its subcellular location is the cytoplasm. The protein operates within lipid metabolism; fatty acid biosynthesis. Functionally, carrier of the growing fatty acid chain in fatty acid biosynthesis. In Prochlorococcus marinus (strain MIT 9301), this protein is Acyl carrier protein.